A 141-amino-acid polypeptide reads, in one-letter code: Small ribosomal subunit protein bS6 (141 aa).

Positions 96 to 141 are disordered; sequence VTGPSAMMKTVEREEFRKASQAGNQTTAPAASPADHAAAPASADRS. Residues 123–141 are compositionally biased toward low complexity; that stretch reads APAASPADHAAAPASADRS.

This sequence belongs to the bacterial ribosomal protein bS6 family.

Its function is as follows. Binds together with bS18 to 16S ribosomal RNA. The sequence is that of Small ribosomal subunit protein bS6 from Verminephrobacter eiseniae (strain EF01-2).